The following is a 349-amino-acid chain: Paired box protein Pax-4 (349 aa).

The paired DNA-binding region spans 5-131; sequence GLSSVNQLGG…SSINRVLRAL (127 aa). The segment at 8-64 is PAI subdomain; sequence SVNQLGGLFVNGRPLPLDTRQQIVQLAIRGMRPCDISRSLKVSNGCVSKILGRYYRT. The segment at 83–131 is RED subdomain; that stretch reads AVVARIAQLKDEYPALFAWEIQRQLCAEGLCTQDKAPSVSSINRVLRAL. A DNA-binding region (homeobox) is located at residues 170-229; the sequence is SHRNRTIFSPGQAEALEKEFQRGQYPDSVVRGKLAAATSLPEDTVRVWFSNRRAKWRRQE. The interval 278-349 is transcription repression; sequence FCQLCWGAVP…APSTYYLHWP (72 aa).

It belongs to the paired homeobox family. Specifically expressed in pancreatic islets.

The protein localises to the nucleus. Functionally, plays an important role in the differentiation and development of pancreatic islet beta cells. Transcriptional repressor that competes with PAX6 in binding to a common element in the glucagon, insulin and somatostatin promoters. This Rattus norvegicus (Rat) protein is Paired box protein Pax-4 (Pax4).